A 199-amino-acid chain; its full sequence is Inner membrane protein E199L (199 aa).

The helical transmembrane segment at 150 to 170 threads the bilayer; that stretch reads INVMNHPFLTLILIILILIII.

This sequence belongs to the asfivirus E199L family. As to quaternary structure, interacts with host PYCR2; this interaction results in autophagy activation. In terms of processing, contains intramolecular disulfide bonds.

It is found in the virion membrane. The protein localises to the host membrane. Essential for viral fusion with host endosomal membrane and core release. Not required for virus morphogenesis and egress. Induces complete autophagy through the interaction with and down-regulation of host PYCR2. The protein is Inner membrane protein E199L of Ornithodoros (relapsing fever ticks).